The sequence spans 213 residues: Pyrrolidone-carboxylate peptidase (213 aa).

Active-site residues include E78, C141, and H165.

Belongs to the peptidase C15 family. As to quaternary structure, homotetramer.

It localises to the cytoplasm. The catalysed reaction is Release of an N-terminal pyroglutamyl group from a polypeptide, the second amino acid generally not being Pro.. Its function is as follows. Removes 5-oxoproline from various penultimate amino acid residues except L-proline. The protein is Pyrrolidone-carboxylate peptidase of Enterococcus faecalis (strain ATCC 700802 / V583).